The primary structure comprises 194 residues: Myelin-associated neurite-outgrowth inhibitor (194 aa).

Position 1 is an N-acetylmethionine (M1). Residues 1–18 (MNPVYSPGSSGVPYANAK) lie on the Cytoplasmic side of the membrane. S6 is subject to Phosphoserine. A helical membrane pass occupies residues 19–41 (GIGYPAGFPVGYAAAPAYSPNMY). Topologically, residues 42–141 (PGANPTFQTG…PAPIPPPRGS (100 aa)) are extracellular. The N-linked (GlcNAc...) asparagine glycan is linked to N45. Residues 142–163 (GVTMGMVAGTTMAMSAGTLLTA) form a helical membrane-spanning segment. At 164–194 (HSPTPVAPHPVTVPTYRAPGTPTYSYVPPQW) the chain is on the cytoplasmic side.

The protein belongs to the FAM168 family. In terms of assembly, may form homodimers. May interact with DAZAP2, FAM168A, PRDX6, RBM6, TMTC1 and YPEL2. Interacts with CDC27. N-glycosylated. As to expression, predominantly expressed in the brain, including olfactory bulb, cortex and cerebellum (at protein level).

It localises to the cytoplasm. The protein resides in the perinuclear region. Its subcellular location is the cell membrane. It is found in the cell projection. The protein localises to the axon. Functionally, inhibitor of neuronal axonal outgrowth. Acts as a negative regulator of CDC42 and STAT3 and a positive regulator of STMN2. Positive regulator of CDC27. In Mus musculus (Mouse), this protein is Myelin-associated neurite-outgrowth inhibitor (Fam168b).